The following is a 31-amino-acid chain: Cytochrome b6-f complex subunit 6 (31 aa).

Residues 3 to 23 traverse the membrane as a helical segment; sequence LIIGYIILLACAFGLAAGLYF.

It belongs to the PetL family. In terms of assembly, the 4 large subunits of the cytochrome b6-f complex are cytochrome b6, subunit IV (17 kDa polypeptide, PetD), cytochrome f and the Rieske protein, while the 4 small subunits are PetG, PetL, PetM and PetN. The complex functions as a dimer.

Its subcellular location is the plastid. It localises to the chloroplast thylakoid membrane. In terms of biological role, component of the cytochrome b6-f complex, which mediates electron transfer between photosystem II (PSII) and photosystem I (PSI), cyclic electron flow around PSI, and state transitions. PetL is important for photoautotrophic growth as well as for electron transfer efficiency and stability of the cytochrome b6-f complex. The chain is Cytochrome b6-f complex subunit 6 from Guillardia theta (Cryptophyte).